We begin with the raw amino-acid sequence, 334 residues long: Transcription initiation factor IIB (334 aa).

The TFIIB-type zinc-finger motif lies at 34–65 (EELVCPMCDSKNIIKDYEKAEIVCEDCGCVLQ). Residues cysteine 38, cysteine 41, cysteine 57, and cysteine 60 each contribute to the Zn(2+) site. 2 repeat units span residues 151 to 234 (SELD…SREL) and 245 to 326 (DYVP…ELTE).

It belongs to the TFIIB family.

Its function is as follows. Stabilizes TBP binding to an archaeal box-A promoter. Also responsible for recruiting RNA polymerase II to the pre-initiation complex (DNA-TBP-TFIIB). The sequence is that of Transcription initiation factor IIB from Methanococcus aeolicus (strain ATCC BAA-1280 / DSM 17508 / OCM 812 / Nankai-3).